The chain runs to 409 residues: NDP-glycosyltransferase ltbB (409 aa).

A glycan (N-linked (GlcNAc...) asparagine) is linked at Asn-36. The chain crosses the membrane as a helical span at residues 319–339 (IWAFAYVWAWLQTLYTAPWIA).

Belongs to the GT2 glycosyltransferase family.

Its subcellular location is the membrane. It functions in the pathway secondary metabolite biosynthesis. NDP-glycosyltransferase; part of the gene cluster that mediates the biosynthesis of luteodienoside A, a glycosylated polyketide consisting of an unusual 1-O-beta-D-glucopyranosyl-myo-inositol (glucinol) ester of 3-hydroxy-2,2,4-trimethylocta-4,6-dienoic acid. LtbB likely serves as a glucinol synthase by transferring D-glucose to myo-inositol using NDP-glucose as a substrate. The ltbA carnitine O-acyltransferase (cAT) domain uses glucinol produced by the glycosyltransferase ltbB as an offloading substrate to release luteodienoside A from the HR-PKS. Since ltbA and ltbB are sufficient for the biosynthesis of luteodienoside A, the functions of the methyltransferase ltbC and the FAD-binding monooxygenase ltbD within the pathway remain obscur. The polypeptide is NDP-glycosyltransferase ltbB (Aspergillus luteorubrus).